The primary structure comprises 413 residues: Mitochondrial inner membrane magnesium transporter MFM1 (413 aa).

Residues 1–35 constitute a mitochondrion transit peptide; that stretch reads MRAFPRVLPFRHQRSYNNILLRTVRLFGSSLSSFD. The N-linked (GlcNAc...) asparagine glycan is linked to Asn202. The helical transmembrane segment at 329 to 349 threads the bilayer; sequence LMLLGIRYAIGMLSLGGALFL. A YGMN motif is present at residues 353-356; sequence YGMN. A helical transmembrane segment spans residues 367-387; the sequence is AYLTVTILGLISTVWLYAKGI.

The protein belongs to the CorA metal ion transporter (MIT) (TC 1.A.35) family. In terms of assembly, forms homooligomers. Interacts with MRS2. N-glycosylated. Glycosylation is important for correct localization of the protein.

It localises to the mitochondrion inner membrane. In terms of biological role, mitochondrial inner membrane magnesium transporter required for mitochondrial magnesium homeostasis. Modulates the conductance of the MRS2 channel. Involved in the splicing of mRNA group II introns in mitochondria by affecting mitochondrial magnesium concentrations, which are critical for group II intron splicing. In Saccharomyces cerevisiae (strain ATCC 204508 / S288c) (Baker's yeast), this protein is Mitochondrial inner membrane magnesium transporter MFM1 (MFM1).